We begin with the raw amino-acid sequence, 379 residues long: UDP-4-amino-4-deoxy-L-arabinose--oxoglutarate aminotransferase (379 aa).

Position 182 is an N6-(pyridoxal phosphate)lysine (Lys182).

It belongs to the DegT/DnrJ/EryC1 family. ArnB subfamily. Homodimer. Pyridoxal 5'-phosphate serves as cofactor.

The catalysed reaction is UDP-4-amino-4-deoxy-beta-L-arabinose + 2-oxoglutarate = UDP-beta-L-threo-pentopyranos-4-ulose + L-glutamate. The protein operates within nucleotide-sugar biosynthesis; UDP-4-deoxy-4-formamido-beta-L-arabinose biosynthesis; UDP-4-deoxy-4-formamido-beta-L-arabinose from UDP-alpha-D-glucuronate: step 2/3. Its pathway is bacterial outer membrane biogenesis; lipopolysaccharide biosynthesis. Its function is as follows. Catalyzes the conversion of UDP-4-keto-arabinose (UDP-Ara4O) to UDP-4-amino-4-deoxy-L-arabinose (UDP-L-Ara4N). The modified arabinose is attached to lipid A and is required for resistance to polymyxin and cationic antimicrobial peptides. The polypeptide is UDP-4-amino-4-deoxy-L-arabinose--oxoglutarate aminotransferase (Shigella boydii serotype 4 (strain Sb227)).